We begin with the raw amino-acid sequence, 248 residues long: NADP-dependent 3-hydroxy acid dehydrogenase YdfG (248 aa).

Residues 7-12, 32-33, 54-55, and Asn81 contribute to the NADP(+) site; these read GATAGF, RR, and DV. Ser134 serves as a coordination point for substrate. NADP(+)-binding positions include Tyr147, Lys151, and 177 to 185; that span reads PGLVGGTEF. Tyr147 acts as the Proton acceptor in catalysis.

This sequence belongs to the short-chain dehydrogenases/reductases (SDR) family. As to quaternary structure, homotetramer.

It catalyses the reaction 3-hydroxypropanoate + NADP(+) = 3-oxopropanoate + NADPH + H(+). The catalysed reaction is L-allo-threonine + NADP(+) = aminoacetone + CO2 + NADPH. Its function is as follows. NADP-dependent dehydrogenase with broad substrate specificity acting on 3-hydroxy acids. Catalyzes the NADP-dependent oxidation of L-allo-threonine to L-2-amino-3-keto-butyrate, which is spontaneously decarboxylated into aminoacetone. Also acts on D-threonine, L-serine, D-serine, D-3-hydroxyisobutyrate, L-3-hydroxyisobutyrate, D-glycerate and L-glycerate. Able to catalyze the reduction of the malonic semialdehyde to 3-hydroxypropionic acid. YdfG is apparently supplementing RutE, the presumed malonic semialdehyde reductase involved in pyrimidine degradation since both are able to detoxify malonic semialdehyde. The chain is NADP-dependent 3-hydroxy acid dehydrogenase YdfG from Escherichia coli (strain K12).